The chain runs to 154 residues: Superoxide dismutase [Cu-Zn] (154 aa).

Residues His47, His49, and His64 each contribute to the Cu cation site. An intrachain disulfide couples Cys58 to Cys147. The Zn(2+) site is built by His64, His72, His81, and Asp84. His121 lines the Cu cation pocket. Arg144 contributes to the substrate binding site.

This sequence belongs to the Cu-Zn superoxide dismutase family. In terms of assembly, homodimer. The cofactor is Cu cation. Zn(2+) is required as a cofactor.

Its subcellular location is the cytoplasm. The catalysed reaction is 2 superoxide + 2 H(+) = H2O2 + O2. Functionally, destroys radicals which are normally produced within the cells and which are toxic to biological systems. This Podospora anserina (Pleurage anserina) protein is Superoxide dismutase [Cu-Zn] (SOD1).